Here is a 201-residue protein sequence, read N- to C-terminus: FMN reductase (NADH) RutF (201 aa).

The tract at residues 169-201 is disordered; it reads APRSGAAPAEPARAARALGARPAEGPALALRSA.

The protein belongs to the non-flavoprotein flavin reductase family. RutF subfamily.

It catalyses the reaction FMNH2 + NAD(+) = FMN + NADH + 2 H(+). In terms of biological role, catalyzes the reduction of FMN to FMNH2 which is used to reduce pyrimidine by RutA via the Rut pathway. In Methylorubrum extorquens (strain ATCC 14718 / DSM 1338 / JCM 2805 / NCIMB 9133 / AM1) (Methylobacterium extorquens), this protein is FMN reductase (NADH) RutF.